A 357-amino-acid chain; its full sequence is MKKYLLLALLPFLYACSNSSNQGINYDEAFAKDTQGLDILTGQFSHNIDRIWGVNELLVASRKDYVKYTDSFYTRSHVSFDEGNIVIETQQDLNRLHNAIVHTLLMGADAKGIDLFTSGDVPISSRPFLLGQVVDHQGQQIANQVIASNFATYLIQNKLQTRRLQNGHTVQFVSVPMIANHVEVRARKYLPLIRKAAQRYGIDESLILGIMQTESSFNPYAISYANAIGLMQVVPHTAGRDVFAMKGKGGQPSTRYLYDPANNIDAGVSYLWILQNQYLDGITNPTSKRFAMISAYNSGAGAVLRVFDNDKDTAIYKINQMYPEQVYRILTTVHPSSQARNYLLKVDKAQKKFRVRR.

The signal sequence occupies residues 1-15; that stretch reads MKKYLLLALLPFLYA. Cysteine 16 is lipidated: N-palmitoyl cysteine. Cysteine 16 is lipidated: S-diacylglycerol cysteine.

It belongs to the transglycosylase Slt family.

It localises to the cell outer membrane. The catalysed reaction is Exolytic cleavage of the (1-&gt;4)-beta-glycosidic linkage between N-acetylmuramic acid (MurNAc) and N-acetylglucosamine (GlcNAc) residues in peptidoglycan, from either the reducing or the non-reducing ends of the peptidoglycan chains, with concomitant formation of a 1,6-anhydrobond in the MurNAc residue.. Its function is as follows. Murein-degrading enzyme. May play a role in recycling of muropeptides during cell elongation and/or cell division. The sequence is that of Membrane-bound lytic murein transglycosylase C from Haemophilus influenzae (strain 86-028NP).